Reading from the N-terminus, the 149-residue chain is 2S seed storage albumin protein (149 aa).

The signal sequence occupies residues 1-22; it reads MKLFIILATATLLIAATQATYP. 4 disulfides stabilise this stretch: Cys-38-Cys-98, Cys-52-Cys-87, Cys-88-Cys-133, and Cys-100-Cys-140. Positions 121 to 128 are igE-binding; it reads EGVRDLKE.

This sequence belongs to the 2S seed storage albumins family. As to expression, expressed in seeds (at protein level).

Functionally, seed storage protein. This Fagopyrum esculentum (Common buckwheat) protein is 2S seed storage albumin protein.